A 423-amino-acid polypeptide reads, in one-letter code: Protein SOSEKI 5 (423 aa).

The interval 1-33 is disordered; the sequence is MSSRVFRATPDNNYLVPRRSKDQQDTSPDRNRI. Over residues 19–33 the composition is skewed to basic and acidic residues; that stretch reads RSKDQQDTSPDRNRI. Residues 45-136 are DIX-like oligomerization domain; it reads RKVPVVYYLC…YVLKGSEVLD (92 aa). Disordered regions lie at residues 150-172 and 196-258; these read SSFRDPRSLNPDKNSGDDIPAVI and SSAE…SPET. Positions 196–211 are enriched in polar residues; it reads SSAESTQRLAADASTQ. 2 consecutive short sequence motifs (association to cell membranes) follow at residues 233–234 and 303–304; these read AS and CG. The disordered stretch occupies residues 379 to 423; that stretch reads SSSYNADRCSRMGPTTEKDEEEAVRAKCIPRKPKPVAKRNNGGQQ. Over residues 406 to 415 the composition is skewed to basic residues; that stretch reads CIPRKPKPVA.

The protein belongs to the SOSEKI family. As to quaternary structure, homodimer. Forms long polymer filaments with other SOKs proteins polymers (e.g. SOK1, SOK2, SOK3 and SOK4) crucial for polar localization and biological activity. Binds to ANGUSTIFOLIA (AN). In terms of tissue distribution, expressed during embryogenesis and in roots.

The protein resides in the cell membrane. SOSEKI proteins (SOK1-5) locally interpret global polarity cues and can influence cell division orientation to coordinate cell polarization relative to body axes. The protein is Protein SOSEKI 5 of Arabidopsis thaliana (Mouse-ear cress).